The primary structure comprises 530 residues: uncharacterized protein (530 aa).

The interval 362–408 (NLTPKLNKTNEDIKSDSTSQPQGFPEGNRRVMENPETKVSKTDDEEM) is disordered. A compositionally biased stretch (basic and acidic residues) spans 388–403 (GNRRVMENPETKVSKT).

Belongs to the IIV-6 030L family.

This is an uncharacterized protein from Invertebrate iridescent virus 6 (IIV-6).